Here is a 322-residue protein sequence, read N- to C-terminus: Stage V sporulation protein K (322 aa).

Residue 99–106 (GNPGTGKT) coordinates ATP.

It belongs to the CbxX/CfxQ family.

The chain is Stage V sporulation protein K (spoVK) from Bacillus subtilis (strain 168).